A 903-amino-acid chain; its full sequence is Cell division cycle protein 48 homolog MJ1156 (903 aa).

Residues 220 to 227 (GPPGTGKT) and 493 to 500 (GPPGTGKT) contribute to the ATP site.

The protein belongs to the AAA ATPase family. CDC48 subfamily.

The sequence is that of Cell division cycle protein 48 homolog MJ1156 from Methanocaldococcus jannaschii (strain ATCC 43067 / DSM 2661 / JAL-1 / JCM 10045 / NBRC 100440) (Methanococcus jannaschii).